The chain runs to 95 residues: DNA-directed RNA polymerase subunit omega (95 aa).

Belongs to the RNA polymerase subunit omega family. As to quaternary structure, the RNAP catalytic core consists of 2 alpha, 1 beta, 1 beta' and 1 omega subunit. When a sigma factor is associated with the core the holoenzyme is formed, which can initiate transcription.

It catalyses the reaction RNA(n) + a ribonucleoside 5'-triphosphate = RNA(n+1) + diphosphate. Functionally, promotes RNA polymerase assembly. Latches the N- and C-terminal regions of the beta' subunit thereby facilitating its interaction with the beta and alpha subunits. This Colwellia psychrerythraea (strain 34H / ATCC BAA-681) (Vibrio psychroerythus) protein is DNA-directed RNA polymerase subunit omega.